The following is a 541-amino-acid chain: 2-isopropylmalate synthase (541 aa).

In terms of domain architecture, Pyruvate carboxyltransferase spans 8–284 (VIIFDTTLRD…LTNINTRHIY (277 aa)). The Mn(2+) site is built by Asp17, His208, His210, and Asn244. The segment at 408–541 (RLELVQVSCG…DQPTEVVAGS (134 aa)) is regulatory domain.

The protein belongs to the alpha-IPM synthase/homocitrate synthase family. LeuA type 1 subfamily. In terms of assembly, homodimer. Mn(2+) is required as a cofactor.

The protein localises to the cytoplasm. The enzyme catalyses 3-methyl-2-oxobutanoate + acetyl-CoA + H2O = (2S)-2-isopropylmalate + CoA + H(+). It functions in the pathway amino-acid biosynthesis; L-leucine biosynthesis; L-leucine from 3-methyl-2-oxobutanoate: step 1/4. In terms of biological role, catalyzes the condensation of the acetyl group of acetyl-CoA with 3-methyl-2-oxobutanoate (2-ketoisovalerate) to form 3-carboxy-3-hydroxy-4-methylpentanoate (2-isopropylmalate). In Trichodesmium erythraeum (strain IMS101), this protein is 2-isopropylmalate synthase.